The sequence spans 120 residues: Large ribosomal subunit protein bL21 (120 aa).

This sequence belongs to the bacterial ribosomal protein bL21 family. Part of the 50S ribosomal subunit. Contacts protein L20.

Its function is as follows. This protein binds to 23S rRNA in the presence of protein L20. The protein is Large ribosomal subunit protein bL21 of Roseiflexus castenholzii (strain DSM 13941 / HLO8).